Consider the following 486-residue polypeptide: Nucleolar protein 56 (486 aa).

The region spanning 298 to 416 (CAPSLSALIG…VEDRLEYFTS (119 aa)) is the Nop domain. The segment at 450–486 (KKAKRLAEESVTATAEAEVDEDAPKPKKKKKSKAGDE) is disordered. Residues 475 to 486 (PKKKKKSKAGDE) are compositionally biased toward basic residues.

This sequence belongs to the NOP5/NOP56 family.

The protein resides in the nucleus. The protein localises to the nucleolus. Its function is as follows. Required for 60S ribosomal subunit synthesis. The polypeptide is Nucleolar protein 56 (Caenorhabditis elegans).